Reading from the N-terminus, the 175-residue chain is Polyadenylate-binding protein-interacting protein 6 (175 aa).

The short motif at 7–17 (TLNPYAAAYVP) is the PAM2-like element. The CUE domain maps to 83-126 (EMDMDIEYLLATYPGLSQESINDVYLANTCDLDATIEMLNQLEI). The interval 145–175 (PEIITESSKQKNDGSSASSSSGIRNANVSSS) is disordered. Residues 166 to 175 (GIRNANVSSS) show a composition bias toward polar residues.

In Arabidopsis thaliana (Mouse-ear cress), this protein is Polyadenylate-binding protein-interacting protein 6 (CID6).